We begin with the raw amino-acid sequence, 403 residues long: GTPase Obg (403 aa).

Residues 1-159 (MKFIDESLIR…RDLLLELMLL (159 aa)) enclose the Obg domain. In terms of domain architecture, OBG-type G spans 160–333 (ADVGMLGFPN…LCRDIMDFII (174 aa)). GTP contacts are provided by residues 166-173 (GFPNAGKS), 191-195 (FTTLV), 213-216 (DIPG), 283-286 (NKID), and 314-316 (SAA). Residues Ser173 and Thr193 each contribute to the Mg(2+) site. Positions 363–403 (EYQFDDDEDWDDDWTEEDDDEDWDDDWTEEDDEGIEFIYKP) are disordered. The span at 365–397 (QFDDDEDWDDDWTEEDDDEDWDDDWTEEDDEGI) shows a compositional bias: acidic residues.

It belongs to the TRAFAC class OBG-HflX-like GTPase superfamily. OBG GTPase family. Monomer. The cofactor is Mg(2+).

Its subcellular location is the cytoplasm. Functionally, an essential GTPase which binds GTP, GDP and possibly (p)ppGpp with moderate affinity, with high nucleotide exchange rates and a fairly low GTP hydrolysis rate. Plays a role in control of the cell cycle, stress response, ribosome biogenesis and in those bacteria that undergo differentiation, in morphogenesis control. The protein is GTPase Obg of Haemophilus influenzae (strain PittEE).